A 128-amino-acid polypeptide reads, in one-letter code: Translation initiation factor 5A (128 aa).

The residue at position 35 (Lys-35) is a Hypusine.

This sequence belongs to the eIF-5A family.

The protein resides in the cytoplasm. Functionally, functions by promoting the formation of the first peptide bond. In Archaeoglobus fulgidus (strain ATCC 49558 / DSM 4304 / JCM 9628 / NBRC 100126 / VC-16), this protein is Translation initiation factor 5A (eif5a).